A 208-amino-acid chain; its full sequence is Dephospho-CoA kinase (208 aa).

A DPCK domain is found at 8-208 (LVGVTGGIGS…VYQSLLTVVE (201 aa)). 16 to 21 (GSGKST) provides a ligand contact to ATP.

The protein belongs to the CoaE family.

It is found in the cytoplasm. The catalysed reaction is 3'-dephospho-CoA + ATP = ADP + CoA + H(+). It participates in cofactor biosynthesis; coenzyme A biosynthesis; CoA from (R)-pantothenate: step 5/5. In terms of biological role, catalyzes the phosphorylation of the 3'-hydroxyl group of dephosphocoenzyme A to form coenzyme A. The polypeptide is Dephospho-CoA kinase (Chlorobaculum tepidum (strain ATCC 49652 / DSM 12025 / NBRC 103806 / TLS) (Chlorobium tepidum)).